We begin with the raw amino-acid sequence, 119 residues long: Large ribosomal subunit protein uL22 (119 aa).

The protein belongs to the universal ribosomal protein uL22 family. As to quaternary structure, part of the 50S ribosomal subunit.

Its function is as follows. This protein binds specifically to 23S rRNA; its binding is stimulated by other ribosomal proteins, e.g. L4, L17, and L20. It is important during the early stages of 50S assembly. It makes multiple contacts with different domains of the 23S rRNA in the assembled 50S subunit and ribosome. Functionally, the globular domain of the protein is located near the polypeptide exit tunnel on the outside of the subunit, while an extended beta-hairpin is found that lines the wall of the exit tunnel in the center of the 70S ribosome. This is Large ribosomal subunit protein uL22 from Bifidobacterium animalis subsp. lactis (strain AD011).